We begin with the raw amino-acid sequence, 528 residues long: T-complex protein 1 subunit delta (528 aa).

It belongs to the TCP-1 chaperonin family. Heterooligomeric complex of about 850 to 900 kDa that forms two stacked rings, 12 to 16 nm in diameter.

It localises to the cytoplasm. Functionally, molecular chaperone; assists the folding of proteins upon ATP hydrolysis. Known to play a role, in vitro, in the folding of actin and tubulin. In yeast may play a role in mitotic spindle formation. This Saccharomyces cerevisiae (strain ATCC 204508 / S288c) (Baker's yeast) protein is T-complex protein 1 subunit delta (CCT4).